The primary structure comprises 1746 residues: Inactive tyrosine-protein kinase PEAK1 (1746 aa).

Residues 44–66 (KTNANHSNNHRIRNTGNFRPPVA) form a disordered region. A Phosphoserine modification is found at Ser281. Disordered stretches follow at residues 334-411 (QSMV…KVPE) and 489-517 (LEGP…LTPG). Positions 338–349 (SSDSTSPDSSLT) are enriched in low complexity. Over residues 355 to 364 (ETASSLSQKI) the composition is skewed to polar residues. Positions 492–513 (PVNSPKTKSSSSTPNSPVTSSS) are enriched in low complexity. Ser540, Ser572, and Ser587 each carry phosphoserine. The tract at residues 551–577 (ITSGTGPNVPPRKNCHKSAPTSPTATN) is disordered. Residues Tyr635 and Tyr641 each carry the phosphotyrosine modification. Ser648 carries the post-translational modification Phosphoserine. Position 665 is a phosphotyrosine (Tyr665). Disordered stretches follow at residues 671 to 700 (ESKV…HKRG), 713 to 764 (LNRG…EKAS), 802 to 920 (DADV…AADA), 1052 to 1102 (VTED…DPNP), and 1138 to 1158 (GKTD…LPKK). The segment covering 675 to 694 (PDNTTSKTTDCLQTKGFSNS) has biased composition (polar residues). Residues 718–730 (SSPQRSYSSSHSS) are compositionally biased toward low complexity. Polar residues-rich tracts occupy residues 748–758 (TQESQMVGSSS) and 820–841 (LFTS…PTTK). A phosphoserine mark is found at Ser826 and Ser854. A compositionally biased stretch (pro residues) spans 864 to 874 (SEPPAPFPPPR). The segment covering 889 to 902 (HFTNWTKPTSPTRS) has biased composition (polar residues). Ser898 bears the Phosphoserine mark. Composition is skewed to basic and acidic residues over residues 903 to 920 (TEAE…AADA), 1052 to 1062 (VTEDFSPRDPR), and 1084 to 1094 (ELEREDGKEDI). Thr1151 is modified (phosphothreonine). Phosphotyrosine is present on Tyr1188. The segment at 1285-1311 (EVVGKIRSLHTDALKKLAVKCEDLFMA) is required for homodimerization. The Protein kinase domain occupies 1313–1675 (QKDQLRFGVD…LLWGPREDLF (363 aa)). Ser1374 bears the Phosphoserine mark. The segment at 1402 to 1456 (LLPWEDPDDPEKDEDDMEETEEDAKGETDGKNPKPCSEAASSQKENQGVMSKKQR) is disordered. Residues 1406–1423 (EDPDDPEKDEDDMEETEE) show a composition bias toward acidic residues. Residues 1424–1433 (DAKGETDGKN) are compositionally biased toward basic and acidic residues. Residues 1440–1450 (AASSQKENQGV) are compositionally biased toward polar residues. The required for homodimerization stretch occupies residues 1670-1743 (PREDLFQTFT…DSLSCIVKIL (74 aa)).

Belongs to the protein kinase superfamily. In terms of assembly, homodimer. Interacts with BCAR1 and CRK. Interacts with PRAG1. Interacts (when phosphorylated at Tyr-1188) with SHC1 (via PID domain). Found in a complex with PPP1CA, PPP1CC, SHC1 and PEAK1. Interacts (when phosphorylated at Tyr-635) with tensin TNS3 (when phosphorylated on the SH2 domain); TNS3 also interacts with integrins ITGB1, ITGB3 and ITGB5 and mediates their association with PEAK1. Interacts with RASAL2 and GRB2. In terms of processing, phosphorylated on tyrosine in a CSK-dependent manner in response to adhesion to fibronectin and to EGF stimulation. Phosphorylation at Tyr-665 by a Src family kinase controls subcellular localization to focal adhesion and focal adhesion dynamics. Phosphorylation at Tyr-1188 is essential for binding to SHC1. Phosphorylation at Tyr-635 promotes interaction with tensin TNS3.

Its subcellular location is the cytoplasm. It localises to the cytoskeleton. It is found in the cell junction. The protein resides in the focal adhesion. Probable catalytically inactive kinase. Scaffolding protein that regulates the cytoskeleton to control cell spreading and migration by modulating focal adhesion dynamics. Acts as a scaffold for mediating EGFR signaling. The protein is Inactive tyrosine-protein kinase PEAK1 (PEAK1) of Homo sapiens (Human).